The sequence spans 146 residues: Stress enhanced protein 1, chloroplastic (146 aa).

The transit peptide at 1 to 73 (MALSQVSASL…GNRAASVSIR (73 aa)) directs the protein to the chloroplast. The next 2 helical transmembrane spans lie at 84-104 (LDIWLGRGAMVGFAVAITVEI) and 120-140 (LPTVALAVTALVGVLAAVFIF).

It belongs to the ELIP/psbS family.

The protein localises to the plastid. It is found in the chloroplast thylakoid membrane. Its function is as follows. May be involved in non-photochemical quenching, a process that maintains the balance between dissipation and utilization of light energy to minimize generation of oxidizing molecules, thereby protecting the plant against photo-oxidative damage. May play a photoprotective role in the thylakoid membrane in response to light stress. The polypeptide is Stress enhanced protein 1, chloroplastic (Arabidopsis thaliana (Mouse-ear cress)).